The following is a 722-amino-acid chain: Polyribonucleotide nucleotidyltransferase (722 aa).

D505 and D511 together coordinate Mg(2+). The KH domain maps to 572-631; it reads PSITTIKIHPDKIRDVIGKGGATIRGICDETGASIDLDDDGNVKIYADNAAAAQAAVNRV. The S1 motif domain maps to 641 to 709; sequence GAIYKGRVER…NRGRVKLSMK (69 aa).

Belongs to the polyribonucleotide nucleotidyltransferase family. As to quaternary structure, component of the RNA degradosome, which is a multiprotein complex involved in RNA processing and mRNA degradation. Requires Mg(2+) as cofactor.

The protein localises to the cytoplasm. It catalyses the reaction RNA(n+1) + phosphate = RNA(n) + a ribonucleoside 5'-diphosphate. Its function is as follows. Involved in mRNA degradation. Catalyzes the phosphorolysis of single-stranded polyribonucleotides processively in the 3'- to 5'-direction. The sequence is that of Polyribonucleotide nucleotidyltransferase from Marinobacter nauticus (strain ATCC 700491 / DSM 11845 / VT8) (Marinobacter aquaeolei).